We begin with the raw amino-acid sequence, 243 residues long: Protein IN2-1 homolog A (243 aa).

A GST N-terminal domain is found at Gly31–Ala112. Glutathione-binding positions include Lys70, Val84, and Glu96–Ser97. A GST C-terminal domain is found at Asp117–Leu240.

It belongs to the GST superfamily. HSP26 family.

This is Protein IN2-1 homolog A from Oryza sativa subsp. japonica (Rice).